We begin with the raw amino-acid sequence, 1597 residues long: Mitogen-activated protein kinase kinase kinase 4 (1597 aa).

Disordered stretches follow at residues 1–128 (MRDA…VETV) and 424–465 (SPRP…PRVP). Acidic residues predominate over residues 59 to 69 (SDPEDFSDETN). The residue at position 77 (serine 77) is a Phosphoserine. The segment covering 84-94 (QMKRLSAKHQR) has biased composition (basic residues). Serine 424 carries the post-translational modification Phosphoserine. Threonine 440 carries the phosphothreonine modification. Serine 449 carries the post-translational modification Phosphoserine. Acidic residues predominate over residues 449–458 (SGTEESDEEP). Threonine 451 is modified (phosphothreonine). Phosphoserine is present on residues serine 454 and serine 492. 3 disordered regions span residues 1137 to 1157 (RPVK…IIPT), 1190 to 1220 (AAGR…SVPE), and 1233 to 1263 (FRSL…TRRS). Polar residues predominate over residues 1210 to 1219 (APDTRGSSVP). Serine 1241 and serine 1263 each carry phosphoserine. A compositionally biased stretch (basic and acidic residues) spans 1241 to 1250 (SPTEERDEPA). One can recognise a Protein kinase domain in the interval 1332-1590 (WQRGNKIGEG…ASQLLDHAFV (259 aa)). ATP contacts are provided by residues 1338 to 1346 (IGEGQYGKV) and lysine 1361. Aspartate 1452 serves as the catalytic Proton acceptor.

This sequence belongs to the protein kinase superfamily. STE Ser/Thr protein kinase family. MAP kinase kinase kinase subfamily. Monomer and homodimer. Homodimerization enhances kinase activity. Interacts with CDC42. Interacts with TRAF4; this promotes homodimerization. Binds both upstream activators and downstream substrates in multimolecular complexes. Interacts with AXIN1 and DIXDC1; interaction with DIXDC1 prevents interaction with AXIN1. Interacts with GADD45 and MAP2K6. Interacts with ZFP36; this interaction enhances the association with SH3KBP1/CIN85. Interacts with SH3KBP1; this interaction enhances the association with ZFP36. Mg(2+) is required as a cofactor. Widely expressed. High expression was found in skeletal muscle, kidney, testis followed by heart brain and lung. Low expression was found in spleen.

The protein localises to the cytoplasm. It localises to the perinuclear region. The enzyme catalyses L-seryl-[protein] + ATP = O-phospho-L-seryl-[protein] + ADP + H(+). It carries out the reaction L-threonyl-[protein] + ATP = O-phospho-L-threonyl-[protein] + ADP + H(+). Its activity is regulated as follows. N-terminal autoinhibitory domain interacts with the C-terminal kinase domain, inhibiting kinase activity, and preventing interaction with its substrate, MAP2K6. The GADD45 proteins activate the kinase by binding to the N-terminal domain. Activated by phosphorylation on Thr-1494. Component of a protein kinase signal transduction cascade. Activates the CSBP2, P38 and JNK MAPK pathways, but not the ERK pathway. Specifically phosphorylates and activates MAP2K4 and MAP2K6. The protein is Mitogen-activated protein kinase kinase kinase 4 (Map3k4) of Mus musculus (Mouse).